A 293-amino-acid chain; its full sequence is Protease HtpX homolog (293 aa).

2 helical membrane-spanning segments follow: residues 4–24 and 39–59; these read IFLFVATNIAVIAVMSIVLSL and PMLLVFSLVVGFTGAIISLLI. H144 is a binding site for Zn(2+). Residue E145 is part of the active site. H148 is a Zn(2+) binding site. 2 helical membrane passes run 159-179 and 200-220; these read LVQGVVNTFVVFLARVVGYFV and ITVLVCQVVFGIAASVIVAWF. E225 provides a ligand contact to Zn(2+).

It belongs to the peptidase M48B family. The cofactor is Zn(2+).

The protein localises to the cell inner membrane. This chain is Protease HtpX homolog, found in Herminiimonas arsenicoxydans.